Reading from the N-terminus, the 435-residue chain is Proline--tRNA ligase (435 aa).

This sequence belongs to the class-II aminoacyl-tRNA synthetase family. ProS type 2 subfamily. Homodimer.

The protein localises to the cytoplasm. The catalysed reaction is tRNA(Pro) + L-proline + ATP = L-prolyl-tRNA(Pro) + AMP + diphosphate. Its function is as follows. Catalyzes the attachment of proline to tRNA(Pro) in a two-step reaction: proline is first activated by ATP to form Pro-AMP and then transferred to the acceptor end of tRNA(Pro). The sequence is that of Proline--tRNA ligase from Rhodospirillum rubrum (strain ATCC 11170 / ATH 1.1.1 / DSM 467 / LMG 4362 / NCIMB 8255 / S1).